The chain runs to 571 residues: Putative clathrin assembly protein At2g01600 (571 aa).

One can recognise an ENTH domain in the interval 24–161 (RVNSEYADLD…ECFRVLKYDT (138 aa)). Disordered regions lie at residues 325–346 (YRPD…REML) and 474–571 (PAPN…TGLI). A compositionally biased stretch (basic and acidic residues) spans 337–346 (EPSHEEREML). The segment covering 508–522 (QQTYQHQPQPTYQHQ) has biased composition (low complexity). Polar residues-rich tracts occupy residues 523–532 (SNPPTNNSNP) and 543–571 (PVSQ…TGLI).

It localises to the membrane. The protein resides in the clathrin-coated pit. It is found in the golgi apparatus. The protein localises to the cytoplasmic vesicle. Its subcellular location is the clathrin-coated vesicle. The protein is Putative clathrin assembly protein At2g01600 of Arabidopsis thaliana (Mouse-ear cress).